The following is a 282-amino-acid chain: Bifunctional protein FolD (282 aa).

NADP(+) contacts are provided by residues 165 to 167 (NRS), Ser-190, and Ile-231.

Belongs to the tetrahydrofolate dehydrogenase/cyclohydrolase family. As to quaternary structure, homodimer.

The enzyme catalyses (6R)-5,10-methylene-5,6,7,8-tetrahydrofolate + NADP(+) = (6R)-5,10-methenyltetrahydrofolate + NADPH. The catalysed reaction is (6R)-5,10-methenyltetrahydrofolate + H2O = (6R)-10-formyltetrahydrofolate + H(+). It functions in the pathway one-carbon metabolism; tetrahydrofolate interconversion. Its function is as follows. Catalyzes the oxidation of 5,10-methylenetetrahydrofolate to 5,10-methenyltetrahydrofolate and then the hydrolysis of 5,10-methenyltetrahydrofolate to 10-formyltetrahydrofolate. The chain is Bifunctional protein FolD from Clostridium botulinum (strain Okra / Type B1).